A 271-amino-acid polypeptide reads, in one-letter code: Elongation factor Ts (271 aa).

The tract at residues 76 to 79 (TDFV) is involved in Mg(2+) ion dislocation from EF-Tu.

Belongs to the EF-Ts family.

The protein resides in the cytoplasm. Its function is as follows. Associates with the EF-Tu.GDP complex and induces the exchange of GDP to GTP. It remains bound to the aminoacyl-tRNA.EF-Tu.GTP complex up to the GTP hydrolysis stage on the ribosome. The polypeptide is Elongation factor Ts (Mycolicibacterium gilvum (strain PYR-GCK) (Mycobacterium gilvum (strain PYR-GCK))).